We begin with the raw amino-acid sequence, 80 residues long: Conotoxin VnMSGL-0121 (80 aa).

An N-terminal signal peptide occupies residues 1–20 (MSGLGIMVLTLLLLVSMATS). Residues 21-44 (HQDGGGKQATQRDAINVRRRRSIT) constitute a propeptide that is removed on maturation. 3 disulfide bridges follow: C52–C65, C56–C74, and C64–C78. F79 carries the phenylalanine amide modification.

Belongs to the conotoxin O3 superfamily. Expressed by the venom duct.

It localises to the secreted. This Conus ventricosus (Mediterranean cone) protein is Conotoxin VnMSGL-0121.